The following is a 132-amino-acid chain: Large ribosomal subunit protein uL14 (132 aa).

The protein belongs to the universal ribosomal protein uL14 family. In terms of assembly, part of the 50S ribosomal subunit. Forms a cluster with proteins L3 and L24e, part of which may contact the 16S rRNA in 2 intersubunit bridges.

Its function is as follows. Binds to 23S rRNA. Forms part of two intersubunit bridges in the 70S ribosome. This chain is Large ribosomal subunit protein uL14, found in Methanosarcina acetivorans (strain ATCC 35395 / DSM 2834 / JCM 12185 / C2A).